The following is a 424-amino-acid chain: UPF0597 protein Ssed_2537 (424 aa).

The protein belongs to the UPF0597 family.

This is UPF0597 protein Ssed_2537 from Shewanella sediminis (strain HAW-EB3).